Reading from the N-terminus, the 364-residue chain is Nicotinate-nucleotide--dimethylbenzimidazole phosphoribosyltransferase (364 aa).

The Proton acceptor role is filled by glutamate 332.

It belongs to the CobT family.

It carries out the reaction 5,6-dimethylbenzimidazole + nicotinate beta-D-ribonucleotide = alpha-ribazole 5'-phosphate + nicotinate + H(+). The protein operates within nucleoside biosynthesis; alpha-ribazole biosynthesis; alpha-ribazole from 5,6-dimethylbenzimidazole: step 1/2. Its function is as follows. Catalyzes the synthesis of alpha-ribazole-5'-phosphate from nicotinate mononucleotide (NAMN) and 5,6-dimethylbenzimidazole (DMB). In Salinispora tropica (strain ATCC BAA-916 / DSM 44818 / JCM 13857 / NBRC 105044 / CNB-440), this protein is Nicotinate-nucleotide--dimethylbenzimidazole phosphoribosyltransferase.